Here is a 130-residue protein sequence, read N- to C-terminus: Large ribosomal subunit protein bL17 (130 aa).

It belongs to the bacterial ribosomal protein bL17 family. In terms of assembly, part of the 50S ribosomal subunit. Contacts protein L32.

This is Large ribosomal subunit protein bL17 from Delftia acidovorans (strain DSM 14801 / SPH-1).